A 446-amino-acid chain; its full sequence is 5-hydroxytryptamine receptor 7 (446 aa).

Residues 1–84 are Extracellular-facing; that stretch reads MMGVNSSGRP…INYGRAEKVV (84 aa). N-linked (GlcNAc...) asparagine glycosylation is found at N5 and N67. A helical membrane pass occupies residues 85–109; that stretch reads IGSILTLITLLTIAGNCLVVISVCF. At 110–119 the chain is on the cytoplasmic side; that stretch reads VKKLRQPSNY. A helical membrane pass occupies residues 120–141; it reads LIVSLALADLSVAVAVIPFVSV. Topologically, residues 142–153 are extracellular; it reads TDLIGGKWIFGH. Residues 154–179 form a helical membrane-spanning segment; that stretch reads FFCNVFIAMDVMCCTASIMTLCVISI. A disulfide bridge connects residues C156 and C232. D163 is a binding site for serotonin. At 180-199 the chain is on the cytoplasmic side; that stretch reads DRYLGITRPLTYPVRQNGKC. The helical transmembrane segment at 200 to 220 threads the bilayer; it reads MPKMILSVWLLSASITLPPLF. At 221–238 the chain is on the extracellular side; the sequence is GWAQNVNDDKVCLISQDF. A helical transmembrane segment spans residues 239–261; it reads GYTIYSTAVAFYIPMSVMLFMYY. Residues 262 to 327 are Cytoplasmic-facing; sequence RIYKAARKSA…SIFKREQKAA (66 aa). The helical transmembrane segment at 328–353 threads the bilayer; sequence TTLGIIVGAFTVCWLPFFLLSTARPF. Residues 354–364 are Extracellular-facing; sequence ICGTACSCIPL. The chain crosses the membrane as a helical span at residues 365–388; that stretch reads WVERTCLWLGYANSLINPFIYAFF. At 389-446 the chain is on the cytoplasmic side; that stretch reads NRDLRTTYRSLLQCQYRNINRKLSAAGMHEALKLAERPERPECVLQNSDYCRKKGHDS. C402 is lipidated: S-palmitoyl cysteine.

The protein belongs to the G-protein coupled receptor 1 family.

It is found in the cell membrane. Its function is as follows. G-protein coupled receptor for 5-hydroxytryptamine (serotonin), a biogenic hormone that functions as a neurotransmitter, a hormone and a mitogen. Ligand binding causes a conformation change that triggers signaling via guanine nucleotide-binding proteins (G proteins) and modulates the activity of downstream effectors. HTR7 is coupled to G(s) G alpha proteins and mediates activation of adenylate cyclase activity. The polypeptide is 5-hydroxytryptamine receptor 7 (HTR7) (Cavia porcellus (Guinea pig)).